Reading from the N-terminus, the 791-residue chain is Protein CLASP-2 (791 aa).

Low complexity-rich tracts occupy residues 259–271, 323–334, and 372–381; these read ASDA…SVNS, RTPNTRPMTTRT, and SQPGSRNGSP. 3 disordered regions span residues 259–283, 315–391, and 422–454; these read ASDA…SKLS, TRMT…TGTL, and AMNT…PQKS. The span at 422–434 shows a compositional bias: polar residues; sequence AMNTAKESLGQPS.

It belongs to the CLASP family. Interacts with hcp-1 and hcp-2.

Its subcellular location is the cytoplasm. It is found in the cytoskeleton. The protein resides in the microtubule organizing center. It localises to the centrosome. The protein localises to the chromosome. Its subcellular location is the centromere. It is found in the kinetochore. The protein resides in the spindle. In terms of biological role, probable microtubule plus-end tracking protein that promotes the stabilization of dynamic microtubules. Required for the formation of mitotic and meiotic spindles. Specifically promotes the polymerization of kinetochore-bound microtubules. Also required for cytoplasmic streaming. This Caenorhabditis briggsae protein is Protein CLASP-2 (cls-2).